The sequence spans 437 residues: MKNWKFPLISTLLLLLTINVHAAPVELDRVVAIVDEGVVLQSDIDTSLKTVKINAQEKGQPLPDEAVLREQVLEKLIVDTIQSQQAEKMGIRIDDTRLEAALNDIAKENNMTLAQLQQKTAAQGLPYANFREQIRKEIAASEARNAQVRRRINILPQEVESLAQLLAEETQATVQYKISHIQLRVEDGATQADKEALEKQAEDLTERLKQGADFATMAYTYSKGPKALQGGDWGWMRKEEMPTIFADQITGQGKNSIIGPFRSGVGFHILKIDDVKGLETVAVTEVNARHILIKTSVIMSDEGAQRLLNTIIDDIKSGKETFADMAQRYSQDPGSAANDGELGFQTPDLYVPEFKHQVETLPVGQISAPFKTVHGWHIAEVLERRQVDRTDAAMKNKAYRILLNRKFNEEAGAWLQEIRASAYVEILQDDDGEDDNE.

An N-terminal signal peptide occupies residues 1–22 (MKNWKFPLISTLLLLLTINVHA). 2 consecutive PpiC domains span residues 173-274 (TVQY…KIDD) and 283-383 (VTEV…EVLE).

The protein resides in the periplasm. The catalysed reaction is [protein]-peptidylproline (omega=180) = [protein]-peptidylproline (omega=0). Its function is as follows. Chaperone involved in the correct folding and assembly of outer membrane proteins. Recognizes specific patterns of aromatic residues and the orientation of their side chains, which are found more frequently in integral outer membrane proteins. May act in both early periplasmic and late outer membrane-associated steps of protein maturation. In Aliivibrio fischeri (strain ATCC 700601 / ES114) (Vibrio fischeri), this protein is Chaperone SurA.